The following is a 256-amino-acid chain: MEEEIYYSVRMRASRDAPHEQGGKHISGGERLITYSGLQEAVNGLLHKGFSHSRGTPDFMQIQLESINQPIKTIRPLPVAVHQTDTAEKGQAVARKLLQKAGIPPHMIEKAYQNIAEYAEVRGAVLFDIQTGKRIDGRKERGVRVSRMDWPAHDFQKWTLEHKMPENPRIKEAHAIAAKVCAHPGIIAELCWSDDPDYITGYVAAKKLGYQRITKMKNAGDESGCRIFFTDGAIDTESCIHFLEKQPVFIQREGKI.

It belongs to the BioW family. In terms of assembly, homodimer. Requires Mg(2+) as cofactor.

It catalyses the reaction heptanedioate + ATP + CoA = 6-carboxyhexanoyl-CoA + AMP + diphosphate. The protein operates within metabolic intermediate metabolism; pimeloyl-CoA biosynthesis; pimeloyl-CoA from pimelate: step 1/1. Catalyzes the transformation of pimelate into pimeloyl-CoA with concomitant hydrolysis of ATP to AMP. In Bacillus amyloliquefaciens (strain ATCC 23350 / DSM 7 / BCRC 11601 / CCUG 28519 / NBRC 15535 / NRRL B-14393 / F), this protein is 6-carboxyhexanoate--CoA ligase.